We begin with the raw amino-acid sequence, 157 residues long: Polyferredoxin protein VhcB (157 aa).

4Fe-4S ferredoxin-type domains lie at 23 to 52, 62 to 92, and 100 to 129; these read NGIS…VVNP, KTER…MGKI, and DRIE…LNEE. [4Fe-4S] cluster is bound by residues Cys-32, Cys-35, Cys-38, Cys-42, Cys-72, Cys-75, Cys-78, Cys-82, Cys-109, Cys-112, Cys-115, Cys-119, Cys-136, Cys-139, Cys-142, and Cys-146.

The cofactor is [4Fe-4S] cluster.

The chain is Polyferredoxin protein VhcB (vhcB) from Methanococcus voltae.